A 453-amino-acid polypeptide reads, in one-letter code: MPDNNTEQLQGSPSSDQRLRVDWDNGNHFDVSPDRYAPHLSEFYPIVNSKRPVASSAGSENNDHLDDMNHLRSSKVYSKARRASSITSGTSTINDLQTLITKRDVKETQEALSTLLRNSNAYSDSLLKTSQNGAEIAHSLENIAKLKGCNDETAEKLLSASGLFYLLSNHQLIMSKYFNDLLGDNLIDDIDEFELQTKIMENKFKAQSKEQSLKLKLQERHNFDISKRKIRNLISYRESLSSLQARLDQLETLKHDFYMDSYELVENTCNKVLSKVATVSRAQVEISENIARKGWSGGGLDELLCDADDPFSKKADGPYGTIGGDGETAGEAYNSDEETGGNDVVLNELLEGTSQPSTSKTSLPKSKGSSTVSTPNHSQSSSNKDGVRNNGGGKNGEDEDTDNLMGTENSFSLPPTRNSAEETTQTFKQLSIKEDNDNHSSDTDGMQDQSSNI.

Polar residues predominate over residues 1-16 (MPDNNTEQLQGSPSSD). Positions 1–20 (MPDNNTEQLQGSPSSDQRLR) are disordered. Phosphoserine occurs at positions 59, 84, and 85. Coiled-coil stretches lie at residues 102–122 (KRDV…SNAY) and 230–257 (IRNL…KHDF). Disordered stretches follow at residues 316–340 (DGPY…EETG) and 353–453 (TSQP…SSNI). Position 335 is a phosphoserine (serine 335). Low complexity predominate over residues 353–371 (TSQPSTSKTSLPKSKGSST). 2 stretches are compositionally biased toward polar residues: residues 372 to 384 (VSTP…SSNK) and 404 to 429 (LMGT…TFKQ). Positions 431 to 442 (SIKEDNDNHSSD) are enriched in basic and acidic residues. The span at 443–453 (TDGMQDQSSNI) shows a compositional bias: polar residues.

Homomultimer. Interacts with YPT7 and VPS33.

It localises to the vacuole membrane. May be required for vacuolar fusion. Overexpression leads to fragmentation of vacuoles, missorting of the vacuolar enzyme carboxypeptidase Y (CPY) to the exterior of the cell and accumulation of multivesicular bodies inside the cell. The sequence is that of Protein IVY1 (IVY1) from Saccharomyces cerevisiae (strain ATCC 204508 / S288c) (Baker's yeast).